We begin with the raw amino-acid sequence, 764 residues long: Molybdenum cofactor sulfurase 3 (764 aa).

Position 228 is an N6-(pyridoxal phosphate)lysine (Lys228). Cys394 is a catalytic residue. Residues Leu607–Leu762 form the MOSC domain.

The protein belongs to the class-V pyridoxal-phosphate-dependent aminotransferase family. MOCOS subfamily. Pyridoxal 5'-phosphate is required as a cofactor.

The enzyme catalyses Mo-molybdopterin + L-cysteine + AH2 = thio-Mo-molybdopterin + L-alanine + A + H2O. In terms of biological role, sulfurates the molybdenum cofactor. Sulfation of molybdenum is essential for xanthine dehydrogenase (XDH) and aldehyde oxidase (ADO) enzymes in which molybdenum cofactor is liganded by 1 oxygen and 1 sulfur atom in active form. The sequence is that of Molybdenum cofactor sulfurase 3 from Aedes aegypti (Yellowfever mosquito).